We begin with the raw amino-acid sequence, 153 residues long: Aspartate carbamoyltransferase regulatory chain (153 aa).

Zn(2+)-binding residues include cysteine 109, cysteine 114, cysteine 138, and cysteine 141.

Belongs to the PyrI family. Contains catalytic and regulatory chains. The cofactor is Zn(2+).

Involved in allosteric regulation of aspartate carbamoyltransferase. The protein is Aspartate carbamoyltransferase regulatory chain of Klebsiella pneumoniae subsp. pneumoniae (strain ATCC 700721 / MGH 78578).